An 89-amino-acid chain; its full sequence is Small ribosomal subunit protein uS15 (89 aa).

It belongs to the universal ribosomal protein uS15 family. As to quaternary structure, part of the 30S ribosomal subunit. Forms a bridge to the 50S subunit in the 70S ribosome, contacting the 23S rRNA.

Its function is as follows. One of the primary rRNA binding proteins, it binds directly to 16S rRNA where it helps nucleate assembly of the platform of the 30S subunit by binding and bridging several RNA helices of the 16S rRNA. In terms of biological role, forms an intersubunit bridge (bridge B4) with the 23S rRNA of the 50S subunit in the ribosome. This chain is Small ribosomal subunit protein uS15, found in Crocosphaera subtropica (strain ATCC 51142 / BH68) (Cyanothece sp. (strain ATCC 51142)).